Reading from the N-terminus, the 410-residue chain is MTESKGFLRLAWARDHMPVIAEIRKRFQAEKPFKGIKVAMALHVEAKTGIFALLLKEGGAEVKMASCNPLSSDDSVVQSLKEDYGMPVFARKGETSEEYYEYLHRTLDVQPDIIIDDGGDLTKIVHTERKDLAKNILGGNEETTTGVQRLRAMERSGVLLFPMFDVNDANMKHLFDNRYGTGQSTLDGIMNATNLLIAGRTVVVAGYGYCGRGIAMRLKGMGANVIVTEIDPIKANEAIMDGFQVRRMNNAIRDADMVITATGMKDVVKYEDALVAKKNIVLANAGHFNNEVAVSEIEKRSLEVNEVREFVKRYRLENGNTVDIIADGRLVNLAAGQGHPVEIMDLSFALQALTAEYLVKNHDKLERKVYPVPADIDRYVAEIRLKQFGGELDQLNEEQIKYLNSWDEGT.

Residues Asp117 and Glu142 each contribute to the substrate site. An NAD(+)-binding site is contributed by 143-145; it reads TTT. Residues Lys172 and Asp176 each contribute to the substrate site. Residues Asn177, 206–211, Glu229, 285–287, and Asn332 each bind NAD(+); these read GYGYCG and AGH.

The protein belongs to the adenosylhomocysteinase family. NAD(+) serves as cofactor.

Its subcellular location is the cytoplasm. It catalyses the reaction S-adenosyl-L-homocysteine + H2O = L-homocysteine + adenosine. Its pathway is amino-acid biosynthesis; L-homocysteine biosynthesis; L-homocysteine from S-adenosyl-L-homocysteine: step 1/1. May play a key role in the regulation of the intracellular concentration of adenosylhomocysteine. The protein is Adenosylhomocysteinase of Thermoplasma acidophilum (strain ATCC 25905 / DSM 1728 / JCM 9062 / NBRC 15155 / AMRC-C165).